Reading from the N-terminus, the 417-residue chain is uncharacterized protein (417 aa).

The tract at residues 1 to 24 (MSQPPINPLGQPQVPAAASPSGQP) is disordered. A run of 4 helical transmembrane segments spans residues 54–74 (VYDTGIIALAAIAILSILLTA), 79–99 (LMLYALAPALALGALGVTLLI), 117–137 (AIVVPIIVLAIAAGLIAGAFV), and 143–163 (MLVFANPMFVMGLITVGLYFM). Over residues 211–228 (DLSASARMEEHEASQRQD) the composition is skewed to basic and acidic residues. Disordered regions lie at residues 211-283 (DLSA…FKDD) and 308-417 (IMPA…RKNK). Residues 312 to 322 (SSRSPNFSTGT) show a composition bias toward polar residues. Over residues 336 to 347 (EPSIPRVSSSSR) the composition is skewed to low complexity. Residues 391-401 (STANLSPSNPF) are compositionally biased toward polar residues.

This sequence belongs to the chlamydial CPn_0443/CT_005/TC_0273 family.

It is found in the cell membrane. This is an uncharacterized protein from Chlamydia pneumoniae (Chlamydophila pneumoniae).